The sequence spans 245 residues: tRNA pseudouridine synthase A (245 aa).

The active-site Nucleophile is the D52. Y111 contacts substrate.

This sequence belongs to the tRNA pseudouridine synthase TruA family. Homodimer.

The enzyme catalyses uridine(38/39/40) in tRNA = pseudouridine(38/39/40) in tRNA. In terms of biological role, formation of pseudouridine at positions 38, 39 and 40 in the anticodon stem and loop of transfer RNAs. In Nitrobacter hamburgensis (strain DSM 10229 / NCIMB 13809 / X14), this protein is tRNA pseudouridine synthase A.